The sequence spans 255 residues: Staphylococcal secretory antigen ssaA1 (255 aa).

Residues 1-26 form the signal peptide; it reads MKKIVTATIATAGLATIAFAGHDAQA. 3 consecutive repeat copies span residues 75–78, 88–91, and 98–101. The 3 X 4 AA repeats of Y-N-N-Y stretch occupies residues 75 to 101; sequence YNNYNTYSYNNASYNNYYNHSYQYNNY. One can recognise a Peptidase C51 domain in the interval 134–255; the sequence is AAPSSNGRSI…NQAGSYNFIH (122 aa).

It localises to the secreted. Not known; immunogenic protein. This is Staphylococcal secretory antigen ssaA1 (ssaA1) from Staphylococcus aureus (strain MW2).